The sequence spans 812 residues: Plasminogen (812 aa).

A signal peptide spans 1–19 (MDHKEIILLFLLFLKPGQG). The 79-residue stretch at 20-98 (DSLDGYVSTQ…RDVILFEKRV (79 aa)) folds into the PAN domain. Intrachain disulfides connect Cys49–Cys73, Cys53–Cys61, Cys103–Cys181, Cys124–Cys164, Cys152–Cys176, Cys185–Cys262, Cys188–Cys316, Cys206–Cys245, Cys234–Cys257, Cys275–Cys352, Cys296–Cys335, Cys324–Cys347, Cys376–Cys454, Cys397–Cys437, Cys425–Cys449, Cys481–Cys560, Cys502–Cys543, Cys531–Cys555, Cys568–Cys687, Cys578–Cys586, and Cys609–Cys625. Kringle domains follow at residues 102 to 181 (ECKT…IPEC), 184 to 262 (ECMY…IPRC), 274 to 352 (QCLK…IPSC), 375 to 454 (ECYQ…LKRC), and 480 to 560 (DCMY…IPLC). Residues 582–810 (VVGGCVANPH…YVNWIEREMR (229 aa)) enclose the Peptidase S1 domain. Ser598 is subject to Phosphoserine. Residues His624 and Asp667 each act as charge relay system in the active site. Phosphoserine is present on Ser690. Intrachain disulfides connect Cys701–Cys768, Cys731–Cys747, and Cys758–Cys786. Residue Ser762 is the Charge relay system of the active site.

It belongs to the peptidase S1 family. Plasminogen subfamily. In terms of assembly, interacts (both mature PLG and the angiostatin peptide) with AMOT and CSPG4. Interacts (via the Kringle domains) with HRG; the interaction tethers PLG to the cell surface and enhances its activation. Interacts (via Kringle 4 domain) with ADA; the interaction stimulates PLG activation when in complex with DPP4. Angiostatin: Interacts with ATP5F1A; the interaction inhibits most of the angiogenic effects of angiostatin. Post-translationally, in the presence of the inhibitor, the activation involves only cleavage after Arg-581, yielding two chains held together by two disulfide bonds. In the absence of the inhibitor, the activation involves additionally the removal of the activation peptide.

It is found in the secreted. It catalyses the reaction Preferential cleavage: Lys-|-Xaa &gt; Arg-|-Xaa, higher selectivity than trypsin. Converts fibrin into soluble products.. Converted into plasmin by plasminogen activators, both plasminogen and its activator being bound to fibrin. Cannot be activated with streptokinase. Plasmin dissolves the fibrin of blood clots and acts as a proteolytic factor in a variety of other processes including embryonic development, tissue remodeling, tumor invasion, and inflammation. In ovulation, weakens the walls of the Graafian follicle. It activates the urokinase-type plasminogen activator, collagenases and several complement zymogens, such as C1, C4 and C5. Cleavage of fibronectin and laminin leads to cell detachment and apoptosis. Also cleaves fibrin, thrombospondin and von Willebrand factor. Its role in tissue remodeling and tumor invasion may be modulated by CSPG4. Binds to cells. Functionally, angiostatin is an angiogenesis inhibitor that blocks neovascularization and growth of experimental primary and metastatic tumors in vivo. The polypeptide is Plasminogen (Plg) (Rattus norvegicus (Rat)).